A 161-amino-acid polypeptide reads, in one-letter code: Allophycocyanin beta chain (161 aa).

Asn71 is subject to N4-methylasparagine. Position 81 (Cys81) interacts with (2R,3E)-phycocyanobilin.

It belongs to the phycobiliprotein family. Heterodimer of an alpha and a beta chain. In terms of processing, contains one covalently linked phycocyanobilin chromophore.

The protein localises to the cellular thylakoid membrane. Its function is as follows. Light-harvesting photosynthetic bile pigment-protein from the phycobiliprotein complex. Allophycocyanin has a maximum absorption at approximately 650 nanometers. This Anabaena cylindrica protein is Allophycocyanin beta chain (apcB).